The following is a 143-amino-acid chain: Large ribosomal subunit protein uL16 (143 aa).

Belongs to the universal ribosomal protein uL16 family. Part of the 50S ribosomal subunit.

In terms of biological role, binds 23S rRNA and is also seen to make contacts with the A and possibly P site tRNAs. This Oenococcus oeni (strain ATCC BAA-331 / PSU-1) protein is Large ribosomal subunit protein uL16.